A 135-amino-acid polypeptide reads, in one-letter code: Large ribosomal subunit protein uL16c (135 aa).

Belongs to the universal ribosomal protein uL16 family. In terms of assembly, part of the 50S ribosomal subunit.

It localises to the plastid. It is found in the chloroplast. The sequence is that of Large ribosomal subunit protein uL16c from Populus alba (White poplar).